Consider the following 113-residue polypeptide: uncharacterized protein (113 aa).

Residues 1–14 (MATRNALRIVSRRF) constitute a mitochondrion transit peptide. Residues 41-79 (QKLARQGPGEQAAGSASEAKVAGATASASAESGPKVSED) form a disordered region. The span at 55 to 73 (SASEAKVAGATASASAESG) shows a compositional bias: low complexity.

The protein localises to the mitochondrion. This is an uncharacterized protein from Arabidopsis thaliana (Mouse-ear cress).